The sequence spans 326 residues: MTISTLSSSYGNAQDVPAEDSDRHGSIEPGSEKAANAVERSGIPILEVKNLCHRYPHLDANTLEEINLKVYKGERVAVLGANGAGKSTLFKHLNGILKPLSGEVLVKGEKITKKNVRMCRETVGIVFQDPDDQVLAPSVEEDIAFGPINMGLSSEEVEKRVKEALKMVGLEGFEERAPHHLSGGQKKLVAIAGILAMRPEVIVLDEPTAGLDPLSSARFLELIMKMNKELGITLLLSTHDVDVVPYFAERVFVLHHGKLEADGIPEEIFSDPELLRKAHLRLPRIAEIFEMLQQEGVDINIKITAEKARDEILRVMDSRFQTFRMG.

Residues 1-12 (MTISTLSSSYGN) are compositionally biased toward polar residues. Residues 1–34 (MTISTLSSSYGNAQDVPAEDSDRHGSIEPGSEKA) are disordered. Residues 46-281 (LEVKNLCHRY…PELLRKAHLR (236 aa)) enclose the ABC transporter domain. 80–87 (GANGAGKS) serves as a coordination point for ATP.

The protein belongs to the ABC transporter superfamily.

The protein localises to the cell membrane. In terms of biological role, probably part of an ABC transporter complex. Responsible for energy coupling to the transport system. The protein is Putative ABC transporter ATP-binding protein MA_4020 of Methanosarcina acetivorans (strain ATCC 35395 / DSM 2834 / JCM 12185 / C2A).